Consider the following 613-residue polypeptide: Glucose-6-phosphate isomerase 1, chloroplastic (613 aa).

The segment covering Met1 to Leu14 has biased composition (low complexity). The tract at residues Met1 to Ser21 is disordered. The transit peptide at Met1–Leu48 directs the protein to the chloroplast. Residue Glu392 is the Proton donor of the active site. Active-site residues include His421 and Lys526. Ser595 bears the Phosphoserine mark.

Belongs to the GPI family.

Its subcellular location is the plastid. It is found in the chloroplast stroma. It catalyses the reaction alpha-D-glucose 6-phosphate = beta-D-fructose 6-phosphate. Its pathway is carbohydrate degradation; glycolysis; D-glyceraldehyde 3-phosphate and glycerone phosphate from D-glucose: step 2/4. It functions in the pathway carbohydrate biosynthesis; gluconeogenesis. Inhibited by glycerol-3-P (G3P). Promotes the synthesis of starch in leaves. The sequence is that of Glucose-6-phosphate isomerase 1, chloroplastic (PGI1) from Arabidopsis thaliana (Mouse-ear cress).